Here is a 132-residue protein sequence, read N- to C-terminus: Small ribosomal subunit protein uS8 (132 aa).

Belongs to the universal ribosomal protein uS8 family. As to quaternary structure, part of the 30S ribosomal subunit. Contacts proteins S5 and S12.

Functionally, one of the primary rRNA binding proteins, it binds directly to 16S rRNA central domain where it helps coordinate assembly of the platform of the 30S subunit. The chain is Small ribosomal subunit protein uS8 from Rickettsia bellii (strain OSU 85-389).